Reading from the N-terminus, the 308-residue chain is Methionyl-tRNA formyltransferase (308 aa).

109–112 (SLLP) provides a ligand contact to (6S)-5,6,7,8-tetrahydrofolate.

This sequence belongs to the Fmt family.

It carries out the reaction L-methionyl-tRNA(fMet) + (6R)-10-formyltetrahydrofolate = N-formyl-L-methionyl-tRNA(fMet) + (6S)-5,6,7,8-tetrahydrofolate + H(+). In terms of biological role, attaches a formyl group to the free amino group of methionyl-tRNA(fMet). The formyl group appears to play a dual role in the initiator identity of N-formylmethionyl-tRNA by promoting its recognition by IF2 and preventing the misappropriation of this tRNA by the elongation apparatus. The sequence is that of Methionyl-tRNA formyltransferase from Methylococcus capsulatus (strain ATCC 33009 / NCIMB 11132 / Bath).